The sequence spans 234 residues: Demethylmenaquinone methyltransferase (234 aa).

S-adenosyl-L-methionine contacts are provided by residues T62, D80, 100–101 (DA), and S117.

This sequence belongs to the class I-like SAM-binding methyltransferase superfamily. MenG/UbiE family.

The catalysed reaction is a 2-demethylmenaquinol + S-adenosyl-L-methionine = a menaquinol + S-adenosyl-L-homocysteine + H(+). Its pathway is quinol/quinone metabolism; menaquinone biosynthesis; menaquinol from 1,4-dihydroxy-2-naphthoate: step 2/2. Functionally, methyltransferase required for the conversion of demethylmenaquinol (DMKH2) to menaquinol (MKH2). The chain is Demethylmenaquinone methyltransferase from Mycobacterium bovis (strain ATCC BAA-935 / AF2122/97).